A 60-amino-acid chain; its full sequence is Metallothionein (60 aa).

The tract at residues 1-28 is beta; that stretch reads MDPCECSKTGNCTCGGSCTCKNCSCTSC. 20 residues coordinate a divalent metal cation: Cys4, Cys6, Cys12, Cys14, Cys18, Cys20, Cys23, Cys25, Cys28, Cys32, Cys33, Cys35, Cys36, Cys40, Cys43, Cys47, Cys49, Cys54, Cys58, and Cys59. Residues 29 to 60 are alpha; that stretch reads KKSCCSCCPSGCSKCASGCVCKGKTCDTSCCQ.

The protein belongs to the metallothionein superfamily. Type 1 family.

In terms of biological role, metallothioneins have a high content of cysteine residues that bind various heavy metals. This is Metallothionein (mt) from Gobiomorphus cotidianus (New Zealand common bully).